The primary structure comprises 254 residues: Probable 2,4-dienoyl-CoA reductase [(2E)-enoyl-CoA-producing] (254 aa).

6–38 is an NADP(+) binding site; the sequence is VIITGGSSGMGKAMAKKQAELGWHVMVTGRNHE. Substrate is bound at residue Thr-100. Residue Tyr-142 is the Proton acceptor of the active site. NAD(+) is bound at residue Lys-157.

Belongs to the short-chain dehydrogenases/reductases (SDR) family. 2,4-dienoyl-CoA reductase subfamily.

It catalyses the reaction a 4,5-saturated-(2E)-enoyl-CoA + NADP(+) = a (2E,4E)-dienoyl-CoA + NADPH + H(+). The catalysed reaction is a (2E,4Z)-dienoyl-CoA + NADPH + H(+) = a 4,5-saturated-(2E)-enoyl-CoA + NADP(+). Its pathway is lipid metabolism; fatty acid beta-oxidation. Functionally, auxiliary enzyme of beta-oxidation. It participates in the metabolism of unsaturated fatty enoyl-CoA esters having double bonds in both even- and odd-numbered positions. Catalyzes the NADP-dependent reduction of 2,4-dienoyl-CoA to yield trans-3-enoyl-CoA. This Bacillus subtilis (strain 168) protein is Probable 2,4-dienoyl-CoA reductase [(2E)-enoyl-CoA-producing] (fadH).